A 176-amino-acid polypeptide reads, in one-letter code: MKNKTEYYDQFISKIPNFPKKGVLFYDITSVLLKPEVYSSLINEVYSFYNFKKIDCIAVVESRGYLIGAPLSLKMQLPLVLIRKEGKLPREVFSEEYELEYGFGRIEVHKDDVRTYSNILLIDDILATGGTLKSSAILLERAGGKVKDIFCFIELCAINGRQSLESYEVNSLVRYN.

It belongs to the purine/pyrimidine phosphoribosyltransferase family. As to quaternary structure, homodimer.

It is found in the cytoplasm. The catalysed reaction is AMP + diphosphate = 5-phospho-alpha-D-ribose 1-diphosphate + adenine. It functions in the pathway purine metabolism; AMP biosynthesis via salvage pathway; AMP from adenine: step 1/1. In terms of biological role, catalyzes a salvage reaction resulting in the formation of AMP, that is energically less costly than de novo synthesis. The chain is Adenine phosphoribosyltransferase from Borreliella burgdorferi (strain ATCC 35210 / DSM 4680 / CIP 102532 / B31) (Borrelia burgdorferi).